Consider the following 254-residue polypeptide: Pectate lyase E (254 aa).

Positions 1–17 (MYQPLLLLPLLLTSAFA) are cleaved as a signal peptide. Residues 227–254 (TNNNSKEPKKKSSGPSSYCKYSEPLSKC) form a disordered region. Residue asparagine 229 is glycosylated (N-linked (GlcNAc...) asparagine). A compositionally biased stretch (low complexity) spans 239–254 (SGPSSYCKYSEPLSKC).

It belongs to the polysaccharide lyase 3 family. Requires Ca(2+) as cofactor.

The protein resides in the secreted. It catalyses the reaction Eliminative cleavage of (1-&gt;4)-alpha-D-galacturonan to give oligosaccharides with 4-deoxy-alpha-D-galact-4-enuronosyl groups at their non-reducing ends.. Its function is as follows. Pectinolytic enzyme consist of four classes of enzymes: pectin lyase, polygalacturonase, pectin methylesterase and rhamnogalacturonase. Among pectinolytic enzymes, pectin lyase is the most important in depolymerization of pectin, since it cleaves internal glycosidic bonds of highly methylated pectins. Favors pectate, the anion, over pectin, the methyl ester. This is Pectate lyase E (plyE) from Emericella nidulans (strain FGSC A4 / ATCC 38163 / CBS 112.46 / NRRL 194 / M139) (Aspergillus nidulans).